The chain runs to 436 residues: Trigger factor (436 aa).

The region spanning 161–246 is the PPIase FKBP-type domain; sequence EDQLNIDFVG…VNSVSEPKLP (86 aa).

Belongs to the FKBP-type PPIase family. Tig subfamily.

The protein resides in the cytoplasm. It catalyses the reaction [protein]-peptidylproline (omega=180) = [protein]-peptidylproline (omega=0). Its function is as follows. Involved in protein export. Acts as a chaperone by maintaining the newly synthesized protein in an open conformation. Functions as a peptidyl-prolyl cis-trans isomerase. The protein is Trigger factor of Pseudomonas fluorescens (strain SBW25).